The primary structure comprises 100 residues: MADEEKLPPGWEKRMSRPSGRGYYFNHITNPSQWERPSGNSSSGGKIWQGEPARVRRSHLLVKPVKAALDLAAGNHPDQGGGPGADQRLHPEDQGRREGL.

Positions 1–15 (MADEEKLPPGWEKRM) are enriched in basic and acidic residues. Disordered regions lie at residues 1-52 (MADE…QGEP) and 69-100 (LDLAAGNHPDQGGGPGADQRLHPEDQGRREGL). A WW domain is found at 5–38 (EKLPPGWEKRMSRPSGRGYYFNHITNPSQWERPS). Residues 27 to 44 (HITNPSQWERPSGNSSSG) show a composition bias toward polar residues. The span at 87 to 100 (QRLHPEDQGRREGL) shows a compositional bias: basic and acidic residues.

This chain is Putative PIN1-like protein (PIN1P1), found in Homo sapiens (Human).